We begin with the raw amino-acid sequence, 217 residues long: Octanoyltransferase (217 aa).

The BPL/LPL catalytic domain occupies 32-207 (SESPDELWIV…TFSQLLGYQH (176 aa)). Residues 71–78 (RGGQVTYH), 138–140 (SLG), and 151–153 (GLA) each bind substrate. Cys169 acts as the Acyl-thioester intermediate in catalysis.

Belongs to the LipB family.

It localises to the cytoplasm. It carries out the reaction octanoyl-[ACP] + L-lysyl-[protein] = N(6)-octanoyl-L-lysyl-[protein] + holo-[ACP] + H(+). The protein operates within protein modification; protein lipoylation via endogenous pathway; protein N(6)-(lipoyl)lysine from octanoyl-[acyl-carrier-protein]: step 1/2. In terms of biological role, catalyzes the transfer of endogenously produced octanoic acid from octanoyl-acyl-carrier-protein onto the lipoyl domains of lipoate-dependent enzymes. Lipoyl-ACP can also act as a substrate although octanoyl-ACP is likely to be the physiological substrate. The chain is Octanoyltransferase from Shewanella sp. (strain W3-18-1).